A 425-amino-acid polypeptide reads, in one-letter code: Serine--tRNA ligase (425 aa).

Residue 228 to 230 (TAE) participates in L-serine binding. 259 to 261 (RSE) provides a ligand contact to ATP. Position 282 (Glu282) interacts with L-serine. 346-349 (EIAS) contacts ATP. An L-serine-binding site is contributed by Ser382.

Belongs to the class-II aminoacyl-tRNA synthetase family. Type-1 seryl-tRNA synthetase subfamily. In terms of assembly, homodimer. The tRNA molecule binds across the dimer.

The protein resides in the cytoplasm. The enzyme catalyses tRNA(Ser) + L-serine + ATP = L-seryl-tRNA(Ser) + AMP + diphosphate + H(+). It carries out the reaction tRNA(Sec) + L-serine + ATP = L-seryl-tRNA(Sec) + AMP + diphosphate + H(+). It participates in aminoacyl-tRNA biosynthesis; selenocysteinyl-tRNA(Sec) biosynthesis; L-seryl-tRNA(Sec) from L-serine and tRNA(Sec): step 1/1. Functionally, catalyzes the attachment of serine to tRNA(Ser). Is also able to aminoacylate tRNA(Sec) with serine, to form the misacylated tRNA L-seryl-tRNA(Sec), which will be further converted into selenocysteinyl-tRNA(Sec). This chain is Serine--tRNA ligase, found in Rickettsia prowazekii (strain Madrid E).